Consider the following 586-residue polypeptide: ATPase family AAA domain-containing protein 3A (586 aa).

Disordered regions lie at residues 1–55 (MSWL…PTGL) and 111–134 (QAEE…QYQD). An N-acetylserine modification is found at Ser2. Residues 2 to 50 (SWLFGINKGPKGEGAGPPPPLPPAQPGAEGGGDRGLGDRPAPKDKWSNF) form a required for interaction with the inner surface of the mitochondrial outer membrane region. At 2–246 (SWLFGINKGP…FRAFVTDWDK (245 aa)) the chain is on the mitochondrial intermembrane side. Over residues 17-26 (GPPPPLPPAQ) the composition is skewed to pro residues. Basic and acidic residues-rich tracts occupy residues 32–48 (GGDR…DKWS) and 111–125 (QAEE…ETRQ). Positions 86–219 (QLEQQSKLKE…QIRLKAAEHR (134 aa)) form a coiled coil. The chain crosses the membrane as a helical span at residues 247 to 264 (VTATVAGLTLLAVGVYSA). Over 265-586 (KNATLVAGRF…PGRGDEPSPS (322 aa)) the chain is Mitochondrial matrix. The segment at 290 to 305 (RITVLEALRHPIQVSR) is S100B-binding. Residue Ser321 is modified to Phosphoserine. 352–359 (GPPGTGKT) contacts ATP. N6-acetyllysine is present on Lys491.

It belongs to the AAA ATPase family. As to quaternary structure, can form homooligomers. Homodimer formation at the N-terminus may be regulated by ATP and is required for the interaction with the inner surface of the mitochondrial outer membrane and correct mitochondrial homeostasis. Interacts with components of the mitochondrial ribosome and with other proteins involved in mitochondrial RNA metabolism. May also interact with protein involved in lipid metabolism, including STARD9. May interact with FAM210A. Interacts with GADD45GIP1. Interacts with S100B in a Ca(+2)- and Zn(+2)-dependent manner; this interaction probably occurs in the cytosol prior to mitochondrial targeting. S100B could assist ATAD3A cytoplasmic processing, preventing aggregation and favoring mitochondrial localization. Interacts with HSP60/HSPD1. Forms heterooligomers with ATAD3B; this interaction may affect ATAD3A activity. Interacts with CLPB. Interacts with EIF2AK3/PERK; ATAD3A and EIF2S1/eIF-2-alpha occupy a common binding site within the cytoplasmic loop of EIF2AK3/PERK, leading to prevent EIF2AK3/PERK association with its substrate EIF2S1/eIF-2-alpha. As to expression, overexpressed in lung adenocarcinomas (at protein level).

The protein resides in the mitochondrion inner membrane. It localises to the mitochondrion matrix. Its subcellular location is the mitochondrion nucleoid. The catalysed reaction is ATP + H2O = ADP + phosphate + H(+). Its function is as follows. Essential for mitochondrial network organization, mitochondrial metabolism and cell growth at organism and cellular level. May play an important role in mitochondrial protein synthesis. May also participate in mitochondrial DNA replication. May bind to mitochondrial DNA D-loops and contribute to nucleoid stability. Required for enhanced channeling of cholesterol for hormone-dependent steroidogenesis. Involved in mitochondrial-mediated antiviral innate immunity. Required to protect mitochondria from the PERK-mediated unfolded protein response: specifically inhibits the activity of EIF2AK3/PERK at mitochondria-endoplasmic reticulum contact sites, thereby providing a safe haven for mitochondrial protein translation during endoplasmic reticulum stress. Ability to inhibit EIF2AK3/PERK is independent of its ATPase activity. Also involved in the mitochondrial DNA damage response by promoting signaling between damaged genomes and the mitochondrial membrane, leading to activation of the integrated stress response (ISR). The chain is ATPase family AAA domain-containing protein 3A from Homo sapiens (Human).